Consider the following 387-residue polypeptide: MNVFPKKIMLLGSGELGKEVAIAAKRLGCYVIACDRYNDAPAMQIADQFNVFNMNNGSELKEVIYKCNPDIIIPEIEALAVDVLKEIEQKITVIPNSRATATTMNRDKIRDLASNELNIRTAKFSYAVNQSELDLHAETIGYPLLIKPVMSSSGKGQSLVKNKNELAQAWNLAIEKSRGKSNKIILEEFIDFDLEITLLTIRQSNGKTLFCAPIGHEQKNGDYQCSWQPAELTESVLEKAQQIAKRVTDNLGGVGLFGVEFFIKGEEVIFSELSPRPHDTGLVTLISQNLNEFELHLRAVLGIPIPEIVCHEASASRVILASMETTDVAFTGLEQALSQSNTNVFMFGKPSSTEGRRMGVAVAKAETIDEARIKADNAAQSIQFINE.

N(1)-(5-phospho-beta-D-ribosyl)glycinamide contacts are provided by residues 15–16 (EL) and Glu-75. Residues Arg-106, Lys-147, 152–157 (SSGKGQ), 187–190 (EEFI), and Glu-195 each bind ATP. One can recognise an ATP-grasp domain in the interval 111-301 (DLASNELNIR…EFELHLRAVL (191 aa)). Glu-260 and Glu-272 together coordinate Mg(2+). N(1)-(5-phospho-beta-D-ribosyl)glycinamide contacts are provided by residues Asp-279, Lys-349, and 356–357 (RR).

This sequence belongs to the PurK/PurT family. In terms of assembly, homodimer.

The enzyme catalyses N(1)-(5-phospho-beta-D-ribosyl)glycinamide + formate + ATP = N(2)-formyl-N(1)-(5-phospho-beta-D-ribosyl)glycinamide + ADP + phosphate + H(+). It participates in purine metabolism; IMP biosynthesis via de novo pathway; N(2)-formyl-N(1)-(5-phospho-D-ribosyl)glycinamide from N(1)-(5-phospho-D-ribosyl)glycinamide (formate route): step 1/1. In terms of biological role, involved in the de novo purine biosynthesis. Catalyzes the transfer of formate to 5-phospho-ribosyl-glycinamide (GAR), producing 5-phospho-ribosyl-N-formylglycinamide (FGAR). Formate is provided by PurU via hydrolysis of 10-formyl-tetrahydrofolate. The chain is Formate-dependent phosphoribosylglycinamide formyltransferase from Prochlorococcus marinus (strain NATL1A).